We begin with the raw amino-acid sequence, 388 residues long: Sulfate adenylyltransferase (388 aa).

This sequence belongs to the sulfate adenylyltransferase family.

It carries out the reaction sulfate + ATP + H(+) = adenosine 5'-phosphosulfate + diphosphate. The protein operates within sulfur metabolism; hydrogen sulfide biosynthesis; sulfite from sulfate: step 1/3. The protein is Sulfate adenylyltransferase of Acaryochloris marina (strain MBIC 11017).